Reading from the N-terminus, the 225-residue chain is UPF0758 protein swp_2203 (225 aa).

In terms of domain architecture, MPN spans Ile-102 to Ile-224. Positions 173, 175, and 186 each coordinate Zn(2+). The short motif at His-173–Asp-186 is the JAMM motif element.

Belongs to the UPF0758 family.

The polypeptide is UPF0758 protein swp_2203 (Shewanella piezotolerans (strain WP3 / JCM 13877)).